Here is a 398-residue protein sequence, read N- to C-terminus: Acetate kinase (398 aa).

Asn-8 contributes to the Mg(2+) binding site. Residue Lys-15 coordinates ATP. Residue Arg-89 participates in substrate binding. Asp-146 functions as the Proton donor/acceptor in the catalytic mechanism. Residues 206–210, 283–285, and 331–335 contribute to the ATP site; these read HIGNG, DMR, and GMGEN. A Mg(2+)-binding site is contributed by Glu-383.

It belongs to the acetokinase family. Homodimer. The cofactor is Mg(2+). Requires Mn(2+) as cofactor.

The protein resides in the cytoplasm. The enzyme catalyses acetate + ATP = acetyl phosphate + ADP. The protein operates within metabolic intermediate biosynthesis; acetyl-CoA biosynthesis; acetyl-CoA from acetate: step 1/2. Its function is as follows. Catalyzes the formation of acetyl phosphate from acetate and ATP. Can also catalyze the reverse reaction. The protein is Acetate kinase of Streptococcus pyogenes serotype M4 (strain MGAS10750).